The primary structure comprises 63 residues: Large ribosomal subunit protein uL29 (63 aa).

This sequence belongs to the universal ribosomal protein uL29 family.

The polypeptide is Large ribosomal subunit protein uL29 (Shewanella denitrificans (strain OS217 / ATCC BAA-1090 / DSM 15013)).